The chain runs to 564 residues: 5-aminolevulinate synthase, mitochondrial (564 aa).

The N-terminal 57 residues, Met-1–Tyr-57, are a transit peptide targeting the mitochondrion. Substrate-binding residues include Arg-113, Ser-226, and Lys-245. Residues Ser-278, His-306, and Thr-350 each coordinate pyridoxal 5'-phosphate. Lys-353 is a catalytic residue. The residue at position 353 (Lys-353) is an N6-(pyridoxal phosphate)lysine. Pyridoxal 5'-phosphate is bound by residues Thr-382 and Thr-383. Residue Thr-468 participates in substrate binding.

It belongs to the class-II pyridoxal-phosphate-dependent aminotransferase family. Homodimer. Pyridoxal 5'-phosphate is required as a cofactor.

It localises to the mitochondrion matrix. It carries out the reaction succinyl-CoA + glycine + H(+) = 5-aminolevulinate + CO2 + CoA. It participates in porphyrin-containing compound metabolism; protoporphyrin-IX biosynthesis; 5-aminolevulinate from glycine: step 1/1. In terms of biological role, catalyzes the synthesis of 5-aminolevulinate (ALA) from succinyl-CoA and glycine, the first and rate-limiting step in heme biosynthesis. The protein is 5-aminolevulinate synthase, mitochondrial (HEM1) of Candida albicans (strain SC5314 / ATCC MYA-2876) (Yeast).